A 216-amino-acid chain; its full sequence is uncharacterized protein (216 aa).

The protein belongs to the channel forming colicin family.

This is an uncharacterized protein from Escherichia coli.